We begin with the raw amino-acid sequence, 1144 residues long: Guanine nucleotide-binding protein G(s) subunit alpha isoforms XLas (1144 aa).

Disordered stretches follow at residues 1–186 (MGML…LAPG), 316–558 (DDDT…PAAG), 622–657 (SASA…SAWP), and 735–772 (RSRS…DKKR). The segment covering 31 to 46 (LEAQGAAAPGAGVGPA) has biased composition (low complexity). Over residues 343–356 (KSEHAKRPPLERQA) the composition is skewed to basic and acidic residues. Over residues 358–369 (ETGNSPISSTTA) the composition is skewed to polar residues. Positions 370 to 381 (EEAKVPSLERGE) are enriched in basic and acidic residues. Low complexity-rich tracts occupy residues 467-499 (PAAA…AAEA) and 518-558 (EPAA…PAAG). The span at 644 to 654 (PPTPRPAPRPS) shows a compositional bias: pro residues. The segment covering 743–767 (KAKDPMEERRKQMRKEAMEMREQKR) has biased composition (basic and acidic residues). Residues 745-772 (KDPMEERRKQMRKEAMEMREQKRADKKR) are a coiled coil. One can recognise a G-alpha domain in the interval 789-1144 (CTHRLLLLGA…RMHLRQYELL (356 aa)). The segment at 792 to 805 (RLLLLGAGESGKST) is G1 motif. 797–805 (GAGESGKST) contributes to the GTP binding site. Mg(2+) is bound at residue Ser804. A disordered region spans residues 818–840 (FNGEGGEEDPQAARSNSDGEKAT). The stretch at 837-863 (EKATKVQDIKNNLKEAIETIVAAMSNL) forms a coiled coil. Positions 946–954 (DLPRCRVLT) are G2 motif. GTP is bound by residues 947–954 (LPRCRVLT), 973–977 (DVGGQ), and 1042–1045 (NKQD). Arg951 carries the post-translational modification ADP-ribosylarginine; by cholera toxin. Residue Thr954 participates in Mg(2+) binding. Positions 969 to 978 (FHMFDVGGQR) are G3 motif. Residues 1038-1045 (ILFLNKQD) are G4 motif. Ser1102 bears the Phosphoserine mark. The segment at 1114–1119 (TCAVDT) is G5 motif. Ala1116 serves as a coordination point for GTP.

Belongs to the G-alpha family. G(s) subfamily. G proteins are composed of 3 units; alpha, beta and gamma. The alpha chain contains the guanine nucleotide binding site. Interacts through its N-terminal region with ALEX which is produced from the same locus in a different open reading frame. This interaction may inhibit its adenylyl cyclase-stimulating activity. Interacts with MAGED2. In terms of tissue distribution, enriched in neuroendocrine tissues with a particularly high level of expression in pituitary where it is abundant in intermediate and anterior lobes. In adrenal gland, found in central region containing medullary chromaffin cells but not in cortex. In cerebellum, strongly expressed in perikarya of Purkinje cells. Not detected in liver, kidney or neurohypophysis.

It is found in the cell membrane. The protein resides in the apical cell membrane. Its function is as follows. Guanine nucleotide-binding proteins (G proteins) function as transducers in numerous signaling pathways controlled by G protein-coupled receptors (GPCRs). Signaling involves the activation of adenylyl cyclases, resulting in increased levels of the signaling molecule cAMP. GNAS functions downstream of several GPCRs, including beta-adrenergic receptors. XLas isoforms interact with the same set of receptors as Gnas isoforms. This chain is Guanine nucleotide-binding protein G(s) subunit alpha isoforms XLas, found in Rattus norvegicus (Rat).